The following is a 374-amino-acid chain: Calcium/calmodulin-dependent protein kinase type 1 (374 aa).

The Protein kinase domain occupies 20–276; it reads YDFRDVLGTG…CEQALQHPWI (257 aa). Residues 26–34 and Lys49 each bind ATP; that span reads LGTGAFSEV. Lys59 is covalently cross-linked (Glycyl lysine isopeptide (Lys-Gly) (interchain with G-Cter in ubiquitin)). The Proton acceptor role is filled by Asp141. Thr177 carries the phosphothreonine; by CaMKK1 and CaMKK2 modification. Residues 263–264 carry the Involved in nuclear import motif; sequence KR. Residues 276–316 are autoinhibitory domain; that stretch reads IAGDTALDKNIHQSVSEQIKKNFAKSKWKQAFNATAVVRHM. Residues 296 to 317 are calmodulin-binding; that stretch reads KNFAKSKWKQAFNATAVVRHMR. The short motif at 315-321 is the Nuclear export signal element; that stretch reads HMRKLQL.

This sequence belongs to the protein kinase superfamily. CAMK Ser/Thr protein kinase family. CaMK subfamily. In terms of assembly, monomer. Interacts with XPO1. Post-translationally, phosphorylated by CaMKK1 and CaMKK2 on Thr-177. In terms of processing, polybiquitinated by the E3 ubiquitin-protein ligase complex SCF(FBXL12), leading to proteasomal degradation. Widely expressed.

Its subcellular location is the cytoplasm. It is found in the nucleus. It catalyses the reaction L-seryl-[protein] + ATP = O-phospho-L-seryl-[protein] + ADP + H(+). The enzyme catalyses L-threonyl-[protein] + ATP = O-phospho-L-threonyl-[protein] + ADP + H(+). Activated by Ca(2+)/calmodulin. Binding of calmodulin results in conformational change that relieves intrasteric autoinhibition and allows phosphorylation of Thr-177 within the activation loop by CaMKK1 or CaMKK2. Phosphorylation of Thr-177 results in several fold increase in total activity. Unlike CaMK4, is unable to exhibit autonomous activity after Ca(2+)/calmodulin activation. In terms of biological role, calcium/calmodulin-dependent protein kinase that operates in the calcium-triggered CaMKK-CaMK1 signaling cascade and, upon calcium influx, regulates transcription activators activity, cell cycle, hormone production, cell differentiation, actin filament organization and neurite outgrowth. Recognizes the substrate consensus sequence [MVLIF]-x-R-x(2)-[ST]-x(3)-[MVLIF]. Regulates axonal extension and growth cone motility in hippocampal and cerebellar nerve cells. Upon NMDA receptor-mediated Ca(2+) elevation, promotes dendritic growth in hippocampal neurons and is essential in synapses for full long-term potentiation (LTP) and ERK2-dependent translational activation. Downstream of NMDA receptors, promotes the formation of spines and synapses in hippocampal neurons by phosphorylating ARHGEF7/BETAPIX on 'Ser-516', which results in the enhancement of ARHGEF7 activity and activation of RAC1. Promotes neuronal differentiation and neurite outgrowth by activation and phosphorylation of MARK2 on 'Ser-91', 'Ser-92', 'Ser-93' and 'Ser-294'. Promotes nuclear export of HDAC5 and binding to 14-3-3 by phosphorylation of 'Ser-259' and 'Ser-498' in the regulation of muscle cell differentiation. Regulates NUMB-mediated endocytosis by phosphorylation of NUMB on 'Ser-275' and 'Ser-294'. Involved in the regulation of basal and estrogen-stimulated migration of medulloblastoma cells through ARHGEF7/BETAPIX phosphorylation. Is required for proper activation of cyclin-D1/CDK4 complex during G1 progression in diploid fibroblasts. Plays a role in K(+) and ANG2-mediated regulation of the aldosterone synthase (CYP11B2) to produce aldosterone in the adrenal cortex. Phosphorylates EIF4G3/eIF4GII. In vitro phosphorylates CREB1, ATF1, CFTR, MYL9 and SYN1/synapsin I. The protein is Calcium/calmodulin-dependent protein kinase type 1 (Camk1) of Rattus norvegicus (Rat).